The sequence spans 242 residues: 3-dehydroquinate dehydratase (242 aa).

3-dehydroquinate contacts are provided by residues 39 to 41 and Arg73; that span reads EVR. The active-site Proton donor/acceptor is His135. Lys162 acts as the Schiff-base intermediate with substrate in catalysis. Residues Arg203 and Gln228 each coordinate 3-dehydroquinate.

This sequence belongs to the type-I 3-dehydroquinase family. Homodimer.

It catalyses the reaction 3-dehydroquinate = 3-dehydroshikimate + H2O. It functions in the pathway metabolic intermediate biosynthesis; chorismate biosynthesis; chorismate from D-erythrose 4-phosphate and phosphoenolpyruvate: step 3/7. Functionally, involved in the third step of the chorismate pathway, which leads to the biosynthesis of aromatic amino acids. Catalyzes the cis-dehydration of 3-dehydroquinate (DHQ) and introduces the first double bond of the aromatic ring to yield 3-dehydroshikimate. This chain is 3-dehydroquinate dehydratase, found in Methanosarcina acetivorans (strain ATCC 35395 / DSM 2834 / JCM 12185 / C2A).